Reading from the N-terminus, the 175-residue chain is 3-hydroxyanthranilate 3,4-dioxygenase (175 aa).

An O2-binding site is contributed by Arg-45. Positions 49, 55, and 93 each coordinate Fe cation. Residue Glu-55 participates in substrate binding. Substrate is bound by residues Arg-97 and Glu-107. Residues Cys-122, Cys-125, Cys-159, and Cys-162 each contribute to the a divalent metal cation site.

Belongs to the 3-HAO family. It depends on Fe(2+) as a cofactor.

The protein resides in the cytoplasm. The enzyme catalyses 3-hydroxyanthranilate + O2 = (2Z,4Z)-2-amino-3-carboxymuconate 6-semialdehyde. It functions in the pathway cofactor biosynthesis; NAD(+) biosynthesis; quinolinate from L-kynurenine: step 3/3. Catalyzes the oxidative ring opening of 3-hydroxyanthranilate to 2-amino-3-carboxymuconate semialdehyde, which spontaneously cyclizes to quinolinate. The sequence is that of 3-hydroxyanthranilate 3,4-dioxygenase from Lodderomyces elongisporus (strain ATCC 11503 / CBS 2605 / JCM 1781 / NBRC 1676 / NRRL YB-4239) (Yeast).